The chain runs to 722 residues: Probable C-mannosyltransferase DPY19L4 (722 aa).

Positions 1–34 (MAKEEGTSVEPRQRKKQRTSGSQEAKAEKIRRTP) are disordered. A2 is subject to N-acetylalanine. Positions 25–34 (AKAEKIRRTP) are enriched in basic and acidic residues. 12 consecutive transmembrane segments (helical) span residues 51–71 (IVIGCLAAVISGMMHVFYLSA), 160–177 (VYFYIGIVFGLQGMYVTA), 183–201 (WLMSGTWLAGMLTVAWFLI), 246–262 (FCYLLLSTSTYTFMMVW), 268–284 (VLFLQAVSLLLLDIFSV), 291–307 (YEVYKVYIFSLFLGYLL), 313–331 (ALLVSPLLSLVGAFMLVKC), 351–369 (FYLLCTLPVTLNLIVKMFV), 420–440 (LLPFYVLVLIICLLSMTQVFF), 465–485 (IIYHVIHTLLLGSLAMLMEGL), 487–507 (FIWTPYVCMLAAFGVCSPELW), and 521–541 (PMLLALILSMAVPTIIGLSLW).

This sequence belongs to the dpy-19 family.

It localises to the membrane. Functionally, probable C-mannosyltransferase that mediates C-mannosylation of tryptophan residues on target proteins. This Mus musculus (Mouse) protein is Probable C-mannosyltransferase DPY19L4 (Dpy19l4).